A 417-amino-acid polypeptide reads, in one-letter code: 3-ketoacyl-CoA thiolase, peroxisomal (417 aa).

A peroxisome-targeting transit peptide spans 1 to 15; the sequence is MSQRLQSIKDHLVES. The interval 1–15 is PTS2-type peroxisomal targeting signal; sequence MSQRLQSIKDHLVES. The active-site Acyl-thioester intermediate is the C125. Catalysis depends on proton acceptor residues H375 and C403.

The protein belongs to the thiolase-like superfamily. Thiolase family. In terms of assembly, homodimer. Interacts (via PTS2-type peroxisomal targeting signal region) with PEX7; leading to its translocation into peroxisomes.

The protein localises to the peroxisome. The protein resides in the mitochondrion intermembrane space. It catalyses the reaction an acyl-CoA + acetyl-CoA = a 3-oxoacyl-CoA + CoA. The protein operates within lipid metabolism; fatty acid metabolism. Responsible for the thiolytic cleavage of straight chain 3-keto fatty acyl-CoAs (3-oxoacyl-CoAs). The chain is 3-ketoacyl-CoA thiolase, peroxisomal (POT1) from Saccharomyces cerevisiae (strain ATCC 204508 / S288c) (Baker's yeast).